A 486-amino-acid polypeptide reads, in one-letter code: Hematopoietic lineage cell-specific protein (486 aa).

Residues 27–66 form an involved in HAX-1 binding region; the sequence is FVNDISEKEQRWGAKTIEGSGRTEHINIHQLRNKVSEEHD. The residue at position 41 (Lys-41) is an N6-acetyllysine. Cortactin repeat units follow at residues 79–115, 116–152, and 153–189; these read ASHGYGGRFGVERDRMDKSAVGHEYVADVEKHSSQTD, AARGFGGKYGVERDRADKSAVGFDYKGEVEKHASQKD, and YSHGFGGRYGVEKDKRDKAALGYDYKGETEKHESQRD. Residue Lys-123 is modified to N6-acetyllysine. Tyr-140 is modified (phosphotyrosine). Residues 190–212 form a Cortactin 4; truncated repeat; that stretch reads YAKGFGGQYGIQKDRVDKSAVGF. Lys-192 carries the N6-acetyllysine modification. Residue Tyr-198 is modified to Phosphotyrosine. Phosphotyrosine; by FGR is present on Tyr-222. The tract at residues 226–430 is disordered; the sequence is TPIEAASSGA…AGPSAGAGGA (205 aa). Basic and acidic residues-rich tracts occupy residues 240 to 258 and 265 to 276; these read AKFESLAEEKRKREEEEKA and QQERKAVVKMSR. At Lys-241 the chain carries N6-acetyllysine. Ser-275 is modified (phosphoserine). Thr-330 carries the phosphothreonine modification. Ser-333 is subject to Phosphoserine. Residues 358–367 show a composition bias toward low complexity; the sequence is VVEEPVYEAA. The segment covering 368–413 has biased composition (acidic residues); it reads PELEPEPEPDYEPEPETEPDYEDVGELDRQDEDAEGDYEDVLEPED. Tyr-388 and Tyr-405 each carry phosphotyrosine; by SYK and FES. Residues 429 to 486 enclose the SH3 domain; sequence GAGISAIALYDYQGEGSDELSFDPDDIITDIEMVDEGWWRGQCRGHFGLFPANYVKLL.

As to quaternary structure, interacts (via SH2 domain) with FGR. Associates with the SH2 and SH3 domains of LCK. Binding to he LCK SH3 domain occurs constitutively, while binding to the LCK SH2 domain occurs only upon TCR stimulation. A similar binding pattern was observed with LYN, but not with FYN in which the FYN SH2 region associates upon TCR stimulation but the FYN SH3 region does not associate regardless of TCR stimulation. Directly associates with HAX1, through binding to its C-terminal region. Interacts with HS1BP3. Interacts with FES/FPS. Forms a multiprotein complex with LYN and ANKRD54. In terms of processing, phosphorylated by LYN, FYN and FGR after cross-linking of surface IgM on B-cells. Phosphorylation by LYN, FYN and FGR requires prior phosphorylation by SYK. Binds to LCK in vivo, and is tyrosine phosphorylated upon TCR stimulation. Phosphorylated by FES. As to expression, expressed only in tissues and cells of hematopoietic origin.

Its subcellular location is the mitochondrion. Substrate of the antigen receptor-coupled tyrosine kinase. Plays a role in antigen receptor signaling for both clonal expansion and deletion in lymphoid cells. May also be involved in the regulation of gene expression. The chain is Hematopoietic lineage cell-specific protein (Hcls1) from Mus musculus (Mouse).